We begin with the raw amino-acid sequence, 227 residues long: Enolase-phosphatase E1 (227 aa).

Mg(2+) is bound by residues aspartate 11 and glutamate 13. Residues 118–119 (SS) and lysine 161 each bind substrate. A Mg(2+)-binding site is contributed by aspartate 186.

The protein belongs to the HAD-like hydrolase superfamily. MasA/MtnC family. In terms of assembly, monomer. The cofactor is Mg(2+).

It localises to the cytoplasm. The protein resides in the nucleus. The catalysed reaction is 5-methylsulfanyl-2,3-dioxopentyl phosphate + H2O = 1,2-dihydroxy-5-(methylsulfanyl)pent-1-en-3-one + phosphate. Its pathway is amino-acid biosynthesis; L-methionine biosynthesis via salvage pathway; L-methionine from S-methyl-5-thio-alpha-D-ribose 1-phosphate: step 3/6. It participates in amino-acid biosynthesis; L-methionine biosynthesis via salvage pathway; L-methionine from S-methyl-5-thio-alpha-D-ribose 1-phosphate: step 4/6. Its function is as follows. Bifunctional enzyme that catalyzes the enolization of 2,3-diketo-5-methylthiopentyl-1-phosphate (DK-MTP-1-P) into the intermediate 2-hydroxy-3-keto-5-methylthiopentenyl-1-phosphate (HK-MTPenyl-1-P), which is then dephosphorylated to form the acireductone 1,2-dihydroxy-3-keto-5-methylthiopentene (DHK-MTPene). The chain is Enolase-phosphatase E1 from Saccharomyces cerevisiae (strain RM11-1a) (Baker's yeast).